We begin with the raw amino-acid sequence, 315 residues long: Ribosomal RNA small subunit methyltransferase H (315 aa).

S-adenosyl-L-methionine contacts are provided by residues 37–39 (GGH), Asp57, Phe83, Asp105, and Gln112.

Belongs to the methyltransferase superfamily. RsmH family.

The protein localises to the cytoplasm. The enzyme catalyses cytidine(1402) in 16S rRNA + S-adenosyl-L-methionine = N(4)-methylcytidine(1402) in 16S rRNA + S-adenosyl-L-homocysteine + H(+). Its function is as follows. Specifically methylates the N4 position of cytidine in position 1402 (C1402) of 16S rRNA. This is Ribosomal RNA small subunit methyltransferase H from Pseudomonas putida (strain ATCC 47054 / DSM 6125 / CFBP 8728 / NCIMB 11950 / KT2440).